Reading from the N-terminus, the 226-residue chain is V-type proton ATPase subunit E (226 aa).

Belongs to the V-ATPase E subunit family. In terms of assembly, V-ATPase is a heteromultimeric enzyme made up of two complexes: the ATP-hydrolytic V1 complex and the proton translocation V0 complex. The V1 complex consists of three catalytic AB heterodimers that form a heterohexamer, three peripheral stalks each consisting of EG heterodimers, one central rotor including subunits D and F, and the regulatory subunits C and H. The proton translocation complex V0 consists of the proton transport subunit a, a ring of proteolipid subunits c9c'', rotary subunit d, subunits e and f, and the accessory subunits vah-19/Ac45 and vah-20/PRR. In terms of tissue distribution, expressed in the excretory cell and syncytial hypodermal cells (at protein level). Expressed in the intestine (at protein level).

The protein resides in the cytoplasm. It is found in the apical cell membrane. Its function is as follows. Subunit of the V1 complex of vacuolar(H+)-ATPase (V-ATPase), a multisubunit enzyme composed of a peripheral complex (V1) that hydrolyzes ATP and a membrane integral complex (V0) that translocates protons. V-ATPase is responsible for acidifying and maintaining the pH of intracellular compartments and in some cell types, is targeted to the plasma membrane, where it is responsible for acidifying the extracellular environment. Regulates pH homeostasis in the intestine. Probably by regulating cytoplasmic pH, required for cell survival in the intestine and hypodermis. Involved in receptor-mediated endocytosis. Involved in embryogenesis and larval development. This is V-type proton ATPase subunit E from Caenorhabditis elegans.